The sequence spans 513 residues: ATP synthase subunit alpha 2 (513 aa).

An ATP-binding site is contributed by 169 to 176 (GDRQTGKT).

The protein belongs to the ATPase alpha/beta chains family. In terms of assembly, F-type ATPases have 2 components, CF(1) - the catalytic core - and CF(0) - the membrane proton channel. CF(1) has five subunits: alpha(3), beta(3), gamma(1), delta(1), epsilon(1). CF(0) has three main subunits: a(1), b(2) and c(9-12). The alpha and beta chains form an alternating ring which encloses part of the gamma chain. CF(1) is attached to CF(0) by a central stalk formed by the gamma and epsilon chains, while a peripheral stalk is formed by the delta and b chains.

It is found in the cell inner membrane. It carries out the reaction ATP + H2O + 4 H(+)(in) = ADP + phosphate + 5 H(+)(out). Its function is as follows. Produces ATP from ADP in the presence of a proton gradient across the membrane. The alpha chain is a regulatory subunit. The polypeptide is ATP synthase subunit alpha 2 (Photobacterium profundum (strain SS9)).